The sequence spans 244 residues: 3-oxoacyl-[acyl-carrier-protein] reductase FabG (244 aa).

NADP(+) contacts are provided by residues 9 to 12 (GASR), 60 to 61 (NV), and asparagine 87. Substrate is bound at residue serine 139. The Proton acceptor role is filled by tyrosine 152. Residues 152–156 (YVATK) and isoleucine 185 each bind NADP(+).

It belongs to the short-chain dehydrogenases/reductases (SDR) family. Homotetramer.

It carries out the reaction a (3R)-hydroxyacyl-[ACP] + NADP(+) = a 3-oxoacyl-[ACP] + NADPH + H(+). Its pathway is lipid metabolism; fatty acid biosynthesis. In terms of biological role, catalyzes the NADPH-dependent reduction of beta-ketoacyl-ACP substrates to beta-hydroxyacyl-ACP products, the first reductive step in the elongation cycle of fatty acid biosynthesis. This is 3-oxoacyl-[acyl-carrier-protein] reductase FabG (fabG) from Staphylococcus epidermidis (strain ATCC 35984 / DSM 28319 / BCRC 17069 / CCUG 31568 / BM 3577 / RP62A).